The chain runs to 486 residues: Secreted protein C (486 aa).

The first 22 residues, 1 to 22 (MKINIILLFVGLILAFAVLSNA), serve as a signal peptide directing secretion. The segment at 30 to 332 (GVNPFDNNNS…SGSHGGSSSH (303 aa)) is disordered. An N-linked (GlcNAc...) asparagine glycan is attached at Asn37. Over residues 41–60 (SGSGSGSGGGSSSSGSGTGQ) the composition is skewed to gly residues. The span at 61 to 318 (SSGTVSSSGS…TGSSEYSSSS (258 aa)) shows a compositional bias: low complexity. N-linked (GlcNAc...) asparagine glycans are attached at residues Asn73, Asn74, Asn83, Asn112, Asn129, Asn149, and Asn174.

Belongs to the Sct family.

It is found in the secreted. The polypeptide is Secreted protein C (Dictyostelium discoideum (Social amoeba)).